A 185-amino-acid chain; its full sequence is Elongation factor P (185 aa).

Belongs to the elongation factor P family.

Its subcellular location is the cytoplasm. It participates in protein biosynthesis; polypeptide chain elongation. Its function is as follows. Involved in peptide bond synthesis. Stimulates efficient translation and peptide-bond synthesis on native or reconstituted 70S ribosomes in vitro. Probably functions indirectly by altering the affinity of the ribosome for aminoacyl-tRNA, thus increasing their reactivity as acceptors for peptidyl transferase. The protein is Elongation factor P of Mesomycoplasma hyopneumoniae (strain 7448) (Mycoplasma hyopneumoniae).